We begin with the raw amino-acid sequence, 323 residues long: Olfactory receptor 2T35 (323 aa).

Residues 1-26 are Extracellular-facing; that stretch reads MGMEGLLQNSTNFVLTGLITHPAFPG. An N-linked (GlcNAc...) asparagine glycan is attached at Asn9. The helical transmembrane segment at 27–50 threads the bilayer; sequence LLFAVVFSIFVVAITANLVMILLI. The Cytoplasmic segment spans residues 51 to 58; the sequence is HMDSRLHT. The chain crosses the membrane as a helical span at residues 59–80; the sequence is PMYFLLSQLSIMDTIYICITVP. At 81 to 101 the chain is on the extracellular side; sequence KMLQDLLSKDKTISFLGCAVQ. Cys98 and Cys189 are disulfide-bonded. The chain crosses the membrane as a helical span at residues 102–120; sequence IFYLTLIGGEFFLLGLMAY. The Cytoplasmic portion of the chain corresponds to 121 to 139; that stretch reads DRYVAVCNPLRYPLLMNRR. A helical membrane pass occupies residues 140–158; the sequence is VCLFMVVGSWVGGSLDGFM. Over 159–195 the chain is Extracellular; the sequence is LTPVTMSFPFCRSREINHFFCEIPAVLKLSCTDTSLY. Residues 196-219 traverse the membrane as a helical segment; it reads ETLMYACCVLMLLIPLSVISVSYT. The Cytoplasmic segment spans residues 220–236; that stretch reads HILLTVHRMNSAEGRRK. The helical transmembrane segment at 237-259 threads the bilayer; that stretch reads AFATCSSHIMVVSVFYGAAFYTN. The Extracellular portion of the chain corresponds to 260–272; the sequence is VLPHSYHTPEKDK. A helical membrane pass occupies residues 273–292; it reads VVSAFYTILTPMLNPLIYSL. Over 293 to 323 the chain is Cytoplasmic; that stretch reads RNKDVAAALRKVLGRCGSSQSIRVATVIRKG.

The protein belongs to the G-protein coupled receptor 1 family.

It is found in the cell membrane. Functionally, odorant receptor. This chain is Olfactory receptor 2T35 (OR2T35), found in Homo sapiens (Human).